A 372-amino-acid polypeptide reads, in one-letter code: tRNA-specific 2-thiouridylase MnmA (372 aa).

Residues 11-18 and Met37 contribute to the ATP site; that span reads GMSGGVDS. Residues 97-99 form an interaction with target base in tRNA region; the sequence is NPD. Cys102 serves as the catalytic Nucleophile. An intrachain disulfide couples Cys102 to Cys199. ATP is bound at residue Gly126. The interaction with tRNA stretch occupies residues 149 to 151; that stretch reads KDQ. Cys199 (cysteine persulfide intermediate) is an active-site residue. The interval 309–310 is interaction with tRNA; that stretch reads RY.

The protein belongs to the MnmA/TRMU family.

The protein resides in the cytoplasm. It carries out the reaction S-sulfanyl-L-cysteinyl-[protein] + uridine(34) in tRNA + AH2 + ATP = 2-thiouridine(34) in tRNA + L-cysteinyl-[protein] + A + AMP + diphosphate + H(+). In terms of biological role, catalyzes the 2-thiolation of uridine at the wobble position (U34) of tRNA, leading to the formation of s(2)U34. This is tRNA-specific 2-thiouridylase MnmA from Staphylococcus aureus (strain USA300).